Here is a 170-residue protein sequence, read N- to C-terminus: Peptide deformylase (170 aa).

Fe cation contacts are provided by C91 and H133. Residue E134 is part of the active site. Residue H137 participates in Fe cation binding.

It belongs to the polypeptide deformylase family. Requires Fe(2+) as cofactor.

The catalysed reaction is N-terminal N-formyl-L-methionyl-[peptide] + H2O = N-terminal L-methionyl-[peptide] + formate. Functionally, removes the formyl group from the N-terminal Met of newly synthesized proteins. Requires at least a dipeptide for an efficient rate of reaction. N-terminal L-methionine is a prerequisite for activity but the enzyme has broad specificity at other positions. The protein is Peptide deformylase of Aeromonas salmonicida (strain A449).